The chain runs to 472 residues: Na(+)/H(+) antiporter NhaA (472 aa).

10 consecutive transmembrane segments (helical) span residues 24-44 (ISGL…NLPA), 66-86 (LPIG…TVGL), 108-128 (LCAV…TALF), 156-176 (GWAV…ALFA), 196-216 (LLAI…YWFI), 234-254 (VPWI…FEAG), 290-310 (PFSA…VHFE), 312-332 (MSPL…LVVG), 361-381 (MIPA…IASL), and 392-412 (ARFG…VLLS). The tract at residues 422–472 (AAAAAADEEDDESIDGDGIGQPSHTTEPTTPTEHPGTLADGTASVEIDFRH) is disordered. Over residues 427–436 (ADEEDDESID) the composition is skewed to acidic residues. Over residues 445–456 (HTTEPTTPTEHP) the composition is skewed to low complexity.

Belongs to the NhaA Na(+)/H(+) (TC 2.A.33) antiporter family.

It localises to the cell membrane. The enzyme catalyses Na(+)(in) + 2 H(+)(out) = Na(+)(out) + 2 H(+)(in). Na(+)/H(+) antiporter that extrudes sodium in exchange for external protons. The polypeptide is Na(+)/H(+) antiporter NhaA (Bifidobacterium longum (strain NCC 2705)).